Here is an 83-residue protein sequence, read N- to C-terminus: ATP synthase subunit c (83 aa).

2 helical membrane passes run 10 to 30 (IAVA…FGLL) and 52 to 72 (MFIV…IALY).

The protein belongs to the ATPase C chain family. F-type ATPases have 2 components, F(1) - the catalytic core - and F(0) - the membrane proton channel. F(1) has five subunits: alpha(3), beta(3), gamma(1), delta(1), epsilon(1). F(0) has three main subunits: a(1), b(2) and c(10-14). The alpha and beta chains form an alternating ring which encloses part of the gamma chain. F(1) is attached to F(0) by a central stalk formed by the gamma and epsilon chains, while a peripheral stalk is formed by the delta and b chains.

Its subcellular location is the cell inner membrane. Functionally, f(1)F(0) ATP synthase produces ATP from ADP in the presence of a proton or sodium gradient. F-type ATPases consist of two structural domains, F(1) containing the extramembraneous catalytic core and F(0) containing the membrane proton channel, linked together by a central stalk and a peripheral stalk. During catalysis, ATP synthesis in the catalytic domain of F(1) is coupled via a rotary mechanism of the central stalk subunits to proton translocation. Its function is as follows. Key component of the F(0) channel; it plays a direct role in translocation across the membrane. A homomeric c-ring of between 10-14 subunits forms the central stalk rotor element with the F(1) delta and epsilon subunits. This is ATP synthase subunit c from Shewanella denitrificans (strain OS217 / ATCC BAA-1090 / DSM 15013).